The primary structure comprises 335 residues: Calcium/calmodulin-dependent protein kinase type I (335 aa).

The 261-residue stretch at 31-291 (YRVGRVLGGG…AADALKHPFL (261 aa)) folds into the Protein kinase domain. 37–45 (LGGGTYATV) contacts ATP. Catalysis depends on Asp154, which acts as the Proton acceptor. Thr192 carries the post-translational modification Phosphothreonine; by autocatalysis. The tract at residues 310–334 (NARKTFRTAYNAVRAFNTWKKLENK) is calmodulin-binding.

Belongs to the protein kinase superfamily. CAMK Ser/Thr protein kinase family. CaMK subfamily.

The protein resides in the cytoplasm. The enzyme catalyses L-seryl-[protein] + ATP = O-phospho-L-seryl-[protein] + ADP + H(+). The catalysed reaction is L-threonyl-[protein] + ATP = O-phospho-L-threonyl-[protein] + ADP + H(+). Important in cell cycle regulation. The chain is Calcium/calmodulin-dependent protein kinase type I (cmk1) from Schizosaccharomyces pombe (strain 972 / ATCC 24843) (Fission yeast).